A 54-amino-acid polypeptide reads, in one-letter code: Ovomucoid (54 aa).

Positions 4–54 (VDCSDYPKPACTVEYMPLCGSDNKTYGNKCNFCNAVVDSNGTLTLSHFGKC) constitute a Kazal-like domain. 3 disulfides stabilise this stretch: Cys-6/Cys-36, Cys-14/Cys-33, and Cys-22/Cys-54. The N-linked (GlcNAc...) asparagine glycan is linked to Asn-43.

The protein localises to the secreted. The chain is Ovomucoid from Anser canagicus (Emperor goose).